A 427-amino-acid polypeptide reads, in one-letter code: Glucan 1,3-beta-glucosidase 2 (427 aa).

The signal sequence occupies residues methionine 1–alanine 17. Glutamate 217 (proton donor) is an active-site residue. Cystine bridges form between cysteine 299–cysteine 426 and cysteine 324–cysteine 355. The Nucleophile role is filled by glutamate 316.

Belongs to the glycosyl hydrolase 5 (cellulase A) family.

The protein resides in the secreted. The enzyme catalyses Successive hydrolysis of beta-D-glucose units from the non-reducing ends of (1-&gt;3)-beta-D-glucans, releasing alpha-glucose.. In terms of biological role, beta-glucanases participate in the metabolism of beta-glucan, the main structural component of the cell wall. It could also function biosynthetically as a transglycosylase. This Wickerhamomyces anomalus (Yeast) protein is Glucan 1,3-beta-glucosidase 2 (EXG2).